The primary structure comprises 91 residues: Small ribosomal subunit protein uS15 (91 aa).

The protein belongs to the universal ribosomal protein uS15 family. As to quaternary structure, part of the 30S ribosomal subunit. Forms a bridge to the 50S subunit in the 70S ribosome, contacting the 23S rRNA.

Functionally, one of the primary rRNA binding proteins, it binds directly to 16S rRNA where it helps nucleate assembly of the platform of the 30S subunit by binding and bridging several RNA helices of the 16S rRNA. In terms of biological role, forms an intersubunit bridge (bridge B4) with the 23S rRNA of the 50S subunit in the ribosome. The chain is Small ribosomal subunit protein uS15 from Cytophaga hutchinsonii (strain ATCC 33406 / DSM 1761 / CIP 103989 / NBRC 15051 / NCIMB 9469 / D465).